Consider the following 279-residue polypeptide: Undecaprenyl-diphosphatase (279 aa).

A run of 6 helical transmembrane segments spans residues Phe45–Tyr65, Trp85–Phe105, Phe113–Val133, Ser188–Leu208, Leu226–Leu246, and Phe255–Val275.

This sequence belongs to the UppP family.

It is found in the cell membrane. It catalyses the reaction di-trans,octa-cis-undecaprenyl diphosphate + H2O = di-trans,octa-cis-undecaprenyl phosphate + phosphate + H(+). Catalyzes the dephosphorylation of undecaprenyl diphosphate (UPP). Confers resistance to bacitracin. This Streptococcus agalactiae serotype III (strain NEM316) protein is Undecaprenyl-diphosphatase.